Reading from the N-terminus, the 236-residue chain is Rab-like protein 3 (236 aa).

The small GTPase-like stretch occupies residues 1-235 (MASLDRVKVL…GGGALKNFHC (235 aa)). GTP-binding positions include 16–21 (GVGKSS), 148–150 (KLD), and 179–180 (DC).

This sequence belongs to the small GTPase superfamily. Rab family. Homodimer. Interacts with GPR89; the interaction stabilizes GPR89. Interacts with RAP1GDS1.

In terms of biological role, required for KRAS signaling regulation and modulation of cell proliferation. Regulator of KRAS prenylation, and probably prenylation of other small GTPases. Required for lymphocyte development and function. Not required for myeloid cell development. The chain is Rab-like protein 3 (Rabl3) from Mus musculus (Mouse).